Here is a 239-residue protein sequence, read N- to C-terminus: IkB-like protein (239 aa).

ANK repeat units lie at residues Ser-48–Ser-80, Asp-87–Val-118, Asn-124–Gln-153, and Lys-158–Phe-187. A Nuclear localization signal motif is present at residues His-81–Asp-87. The short motif at Lys-203–Glu-214 is the Nuclear localization signal element. A PxIxITxC motif; Interaction with host PPP3CA motif is present at residues Pro-206 to Cys-213. Positions Phe-228 to Val-231 match the FLCV motif motif.

The protein belongs to the asfivirus A238L family. Interacts with host PPIA. Interacts with host PPP3CA/Calcineurin. Interacts with host RELA/p65; interaction of the 32 kDa form with host RELA results in the formation of a stable complex with NF-kappa-B. Interacts with host PPP3R1. Interacts with host EP300; this interaction inhibits the association of host EP300 with host RELA, JUN and NFATC2. Post-translationally, the protein exists in a 28 kDa and a 32 kDa form, probably due to post-translational modifications which are neither phosphorylation, nor sumoylation.

The protein localises to the host nucleus. The protein resides in the host cytoplasm. Functionally, ikB-like protein that inhibits the binding of NF-kappa-B to DNA, thereby downregulating pro-inflammatory cytokine production. Forms a heterodimer with the NF-kappa-B subunit RELA/p65 and prevents the activation of the NF-kappa-B transcription factor. Inhibits calcineurin function, which is required for the induction of nuclear factor of activated T cells (NFAT)-dependent immune response genes. Prevents the binding of substrates to calcineurin without affecting the phosphatase activity. Does not contain the serine residues that are phosphorylated by host IkB kinase and thus is not degraded following stimulation of the NFkB pathway. The polypeptide is IkB-like protein (A238L) (Ornithodoros (relapsing fever ticks)).